Reading from the N-terminus, the 577-residue chain is Cell adhesion molecule CEACAM20 (577 aa).

A signal peptide spans 1-30 (MELAGFHCCSWTVILLSALLPTTWRPPAAA). Over 31 to 430 (HFIHRADLLS…LQSSSMSPGA (400 aa)) the chain is Extracellular. Ig-like C2-type domains lie at 48–137 (PLAK…ASLT), 142–223 (PDPV…TNLS), 239–324 (PNIE…LKLT), and 329–415 (PDQV…ASVL). A disulfide bridge connects residues Cys72 and Cys120. 2 N-linked (GlcNAc...) asparagine glycosylation sites follow: Asn78 and Asn102. Cystine bridges form between Cys259–Cys307 and Cys358–Cys399. Asn289 carries an N-linked (GlcNAc...) asparagine glycan. A helical membrane pass occupies residues 431–451 (IAGIVIGILVAIALAIGLGYF). The Cytoplasmic segment spans residues 452–577 (LYSTKDRWTR…SLYCKITPSA (126 aa)). The disordered stretch occupies residues 461-568 (RRRSASDTTS…YEKLLNSNHS (108 aa)). A compositionally biased stretch (polar residues) spans 474-484 (IPPTSVMQSTP). The segment covering 516-526 (DSPEQFYEKKP) has biased composition (basic and acidic residues). Over residues 536–551 (KPLPQIPKQPLMPPGP) the composition is skewed to pro residues. 2 positions are modified to phosphotyrosine: Tyr559 and Tyr570.

The protein belongs to the immunoglobulin superfamily. CEA family. As to quaternary structure, interacts (via extracellular domain) with PTPRH (via extracellular domain); the interaction dephosphorylates CEACAM20. Interacts (phosphorylated form) with SYK (via SH2 domains); the interaction further enhances CEACAM20 phosphorylation. Phosphorylated on tyrosine residues by SYK, SRC and FYN in vitro. As to expression, strongly expressed in the small intestine and colon (at protein level). Minimal expression in other tissues (at protein level). Highly expressed in cecum, colon, ileum, jejunum, and testis, and also detected at lower levels in salivary gland and thymus.

The protein resides in the cell projection. It localises to the microvillus membrane. It is found in the apical cell membrane. In terms of biological role, together with the tyrosine-protein kinase SYK, enhances production of the cytokine CXCL8/IL-8 via the NFKB pathway and may thus have a role in the intestinal immune response. The protein is Cell adhesion molecule CEACAM20 of Mus musculus (Mouse).